The sequence spans 445 residues: UPF0210 protein SZO_15840 (445 aa).

Belongs to the UPF0210 family. In terms of assembly, homodimer.

The sequence is that of UPF0210 protein SZO_15840 from Streptococcus equi subsp. zooepidemicus (strain H70).